We begin with the raw amino-acid sequence, 1149 residues long: ATP-dependent helicase/deoxyribonuclease subunit B (1149 aa).

8-15 (GRAGSGKS) is a binding site for ATP. [4Fe-4S] cluster contacts are provided by Cys788, Cys1106, Cys1109, and Cys1115.

This sequence belongs to the helicase family. AddB/RexB type 1 subfamily. As to quaternary structure, heterodimer of AddA and AddB. Mg(2+) serves as cofactor. The cofactor is [4Fe-4S] cluster.

Its function is as follows. The heterodimer acts as both an ATP-dependent DNA helicase and an ATP-dependent, dual-direction single-stranded exonuclease. Recognizes the chi site generating a DNA molecule suitable for the initiation of homologous recombination. The AddB subunit has 5' -&gt; 3' nuclease activity but not helicase activity. This Ruminiclostridium cellulolyticum (strain ATCC 35319 / DSM 5812 / JCM 6584 / H10) (Clostridium cellulolyticum) protein is ATP-dependent helicase/deoxyribonuclease subunit B.